Here is a 111-residue protein sequence, read N- to C-terminus: Protein EARLY FLOWERING 4 (111 aa).

Positions 1-26 (MKRNGETKRRRNVAEEAEQGEDPAMW) are disordered. Ser45 is modified (phosphoserine). The segment at 90–111 (FSSGFHGGKNGHDGGGAAGTRA) is disordered. Residues 94–111 (FHGGKNGHDGGGAAGTRA) are compositionally biased toward gly residues.

This sequence belongs to the EARLY FLOWERING 4 family. In terms of assembly, homodimer. Interacts with ELF3.

Its subcellular location is the nucleus. Component of the central CCA1/LHY-TOC1 feedback loop in the circadian clock that promotes clock accuracy and is required for sustained rhythms in the absence of daily light/dark cycles. Part of a corepressor complex consisting of ELF4, ELF3, and LUX involved in the transcriptional regulation of APRR9. Increases ELF3 nuclear distribution and localization in nuclear bodies. Required for responsiveness to continuous red, by regulating phytochrome B (phyB) signaling (including during seedling de-etiolation) and gene expression. Mediates both entrainment to an environmental cycle and circadian rhythm sustainability under constant conditions. Controls flowering time. Necessary for light-induced expression of both CCA1 and LHY. This Arabidopsis thaliana (Mouse-ear cress) protein is Protein EARLY FLOWERING 4 (ELF4).